We begin with the raw amino-acid sequence, 478 residues long: Protein nucleotidyltransferase YdiU (478 aa).

Residues Gly84, Gly86, Arg87, Lys107, Asp119, Gly120, Arg170, and Arg177 each coordinate ATP. Catalysis depends on Asp246, which acts as the Proton acceptor. Residues Asn247 and Asp256 each contribute to the Mg(2+) site. Asp256 contributes to the ATP binding site.

It belongs to the SELO family. Mg(2+) is required as a cofactor. Requires Mn(2+) as cofactor.

The catalysed reaction is L-seryl-[protein] + ATP = 3-O-(5'-adenylyl)-L-seryl-[protein] + diphosphate. It carries out the reaction L-threonyl-[protein] + ATP = 3-O-(5'-adenylyl)-L-threonyl-[protein] + diphosphate. It catalyses the reaction L-tyrosyl-[protein] + ATP = O-(5'-adenylyl)-L-tyrosyl-[protein] + diphosphate. The enzyme catalyses L-histidyl-[protein] + UTP = N(tele)-(5'-uridylyl)-L-histidyl-[protein] + diphosphate. The catalysed reaction is L-seryl-[protein] + UTP = O-(5'-uridylyl)-L-seryl-[protein] + diphosphate. It carries out the reaction L-tyrosyl-[protein] + UTP = O-(5'-uridylyl)-L-tyrosyl-[protein] + diphosphate. Functionally, nucleotidyltransferase involved in the post-translational modification of proteins. It can catalyze the addition of adenosine monophosphate (AMP) or uridine monophosphate (UMP) to a protein, resulting in modifications known as AMPylation and UMPylation. In Escherichia coli O6:K15:H31 (strain 536 / UPEC), this protein is Protein nucleotidyltransferase YdiU.